The chain runs to 135 residues: Large ribosomal subunit protein eL32 (135 aa).

The protein belongs to the eukaryotic ribosomal protein eL32 family. As to quaternary structure, component of the large ribosomal subunit.

The protein resides in the cytoplasm. Component of the large ribosomal subunit. The ribosome is a large ribonucleoprotein complex responsible for the synthesis of proteins in the cell. In Ictalurus punctatus (Channel catfish), this protein is Large ribosomal subunit protein eL32 (rpl32).